A 214-amino-acid polypeptide reads, in one-letter code: Nucleoside triphosphate pyrophosphatase (214 aa).

D79 acts as the Proton acceptor in catalysis.

This sequence belongs to the Maf family. A divalent metal cation serves as cofactor.

The protein localises to the cytoplasm. The catalysed reaction is a ribonucleoside 5'-triphosphate + H2O = a ribonucleoside 5'-phosphate + diphosphate + H(+). It carries out the reaction a 2'-deoxyribonucleoside 5'-triphosphate + H2O = a 2'-deoxyribonucleoside 5'-phosphate + diphosphate + H(+). In terms of biological role, nucleoside triphosphate pyrophosphatase. May have a dual role in cell division arrest and in preventing the incorporation of modified nucleotides into cellular nucleic acids. This Rhodococcus jostii (strain RHA1) protein is Nucleoside triphosphate pyrophosphatase.